The sequence spans 1481 residues: Cystic fibrosis transmembrane conductance regulator (1481 aa).

Topologically, residues 1–77 (MQRSPLEKAS…KLINALRRCF (77 aa)) are cytoplasmic. A helical transmembrane segment spans residues 78–98 (FWRFMFYGIILYLGEVTKAVQ). In terms of domain architecture, ABC transmembrane type-1 1 spans 81–365 (FMFYGIILYL…WAVQTWYDSL (285 aa)). Topologically, residues 99-122 (PLLLGRIIASYDPDNKAERSIAIY) are extracellular. A helical transmembrane segment spans residues 123-146 (LGIGLCLLFIVRTLLLHPAIFGLH). The Cytoplasmic segment spans residues 147–195 (HIGMQMRIAMFSLIYKKTLKLSSRVLDKISIGQLVSLLSNNLNKFDEGL). The chain crosses the membrane as a helical span at residues 196 to 216 (ALAHFVWIAPLQVTLLMGLLW). Residues 217-222 (ELLQAF) lie on the Extracellular side of the membrane. A helical membrane pass occupies residues 223 to 243 (TFCGLAFLVVLAFLQAGLGKM). At 244–298 (MMKYRDQRAGKINERLVITSEIIENIQSVKAYCWEEAMEKIIENLRQTELKLTRK) the chain is on the cytoplasmic side. The helical transmembrane segment at 299–319 (AAYVRYLNSSAFFFSGFFVVF) threads the bilayer. The Extracellular segment spans residues 320-339 (LSVLPYALLKGIILRKIFTT). Residues 340–358 (ISFCIVLRMAVTRQFPWAV) form a helical membrane-spanning segment. Residues 359–858 (QTWYDSLGAI…YLRYITVHKS (500 aa)) lie on the Cytoplasmic side of the membrane. ATP is bound by residues W401, 457–464 (GSTGAGKT), and Q492. The ABC transporter 1 domain occupies 423 to 645 (NGDNNLFFSN…RPDFSSKLMG (223 aa)). C523 is lipidated: S-palmitoyl cysteine. 2 positions are modified to phosphoserine: S548 and S659. Residues 653–831 (TAERRNSIIT…EEINEEDLRD (179 aa)) are disordered R region. Phosphoserine; by PKA is present on S669. S685 is modified (phosphoserine). K687 is covalently cross-linked (Glycyl lysine isopeptide (Lys-Gly) (interchain with G-Cter in ubiquitin)). 2 positions are modified to phosphoserine: S699 and S711. T716 carries the post-translational modification Phosphothreonine. S736, S767, S790, S795, and S813 each carry phosphoserine. The helical transmembrane segment at 859-879 (LMFVLIWCLVVFLAEVAASLV) threads the bilayer. One can recognise an ABC transmembrane type-1 2 domain in the interval 859–1155 (LMFVLIWCLV…AVNSSIDVDS (297 aa)). Residues 880-918 (VLCLFPKILFQDKGNSTKSANNSYAVIITSTSSYYIFYI) lie on the Extracellular side of the membrane. 2 N-linked (GlcNAc...) asparagine glycosylation sites follow: N894 and N900. Residues 919-939 (YVGVADTLLALGLFRGLPLVH) traverse the membrane as a discontinuously helical segment. Over 940–990 (TLITVSKTLHHKMLQSVLQAPMSTLNTLKTGGILNRFSKDIAVLDDLLPLT) the chain is Cytoplasmic. Residues 991 to 1011 (IFDFVQLLLIVIGAVVVVSVL) traverse the membrane as a helical segment. Topologically, residues 1012–1013 (QP) are extracellular. Residues 1014-1034 (YIFLATVPVIAAFILLRAYFL) traverse the membrane as a helical segment. Over 1035–1095 (HTSQQLKQLE…TANWFLYLST (61 aa)) the chain is Cytoplasmic. A helical transmembrane segment spans residues 1096 to 1116 (LRWFQMRIEMIFVIFFIAVTF). Topologically, residues 1117–1130 (ISILTTGEGEGRVG) are extracellular. Residues 1131-1151 (IILTLAMNIMGTLQWAVNSSI) traverse the membrane as a helical segment. Residues 1152-1481 (DVDSLMRSVS…TEEEVQETKI (330 aa)) are Cytoplasmic-facing. The region spanning 1211-1444 (MTVKDLTAKY…KSLFRQAISP (234 aa)) is the ABC transporter 2 domain. ATP contacts are provided by residues Y1220 and 1245 to 1252 (GRTGSGKS). Residues 1387–1481 (RTLKQAFADC…TEEEVQETKI (95 aa)) are interaction with GORASP2. Residue C1396 is the site of S-palmitoyl cysteine attachment. The interval 1452 to 1481 (PQRNSSRQKSRSNIAALKEETEEEVQETKI) is disordered. Over residues 1453–1464 (QRNSSRQKSRSN) the composition is skewed to low complexity. S1457 carries the phosphoserine modification. Positions 1471–1481 (ETEEEVQETKI) are enriched in acidic residues. Residues 1479 to 1481 (TKI) carry the PDZ-binding motif.

The protein belongs to the ABC transporter superfamily. ABCC family. CFTR transporter (TC 3.A.1.202) subfamily. In terms of assembly, monomer; does not require oligomerization for channel activity. May form oligomers in the membrane. Interacts with SLC26A3, SLC26A6 and NHERF1. Interacts with SHANK2. Interacts with MYO6. Interacts (via C-terminus) with GOPC (via PDZ domain); this promotes CFTR internalization and thereby decreases channel activity. Interacts with SLC4A7 through NHERF1. Found in a complex with MYO5B and RAB11A. Interacts with ANO1. Interacts with SLC26A8. Interacts with AHCYL1; the interaction increases CFTR activity. Interacts with CSE1L. The core-glycosylated form interacts with GORASP2 (via PDZ GRASP-type 1 domain) in respone to ER stress. Interacts with MARCHF2; the interaction leads to CFTR ubiqtuitination and degradation. Interacts with ADGRG2. Post-translationally, N-glycosylated. In terms of processing, phosphorylated; cAMP treatment promotes phosphorylation and activates the channel. Dephosphorylation decreases the ATPase activity (in vitro). Phosphorylation at PKA sites activates the channel. Phosphorylation at PKC sites enhances the response to phosphorylation by PKA. Phosphorylated by AMPK; this inhibits channel activity. Ubiquitinated, leading to its degradation in the lysosome. Deubiquitination by USP10 in early endosomes enhances its endocytic recycling to the cell membrane. Ubiquitinated by RNF185 during ER stress. Ubiquitinated by MARCHF2.

It localises to the apical cell membrane. Its subcellular location is the early endosome membrane. The protein resides in the cell membrane. It is found in the recycling endosome membrane. The protein localises to the endoplasmic reticulum membrane. It localises to the nucleus. It carries out the reaction ATP + H2O + closed Cl(-) channel = ADP + phosphate + open Cl(-) channel.. It catalyses the reaction chloride(in) = chloride(out). The catalysed reaction is hydrogencarbonate(in) = hydrogencarbonate(out). The enzyme catalyses ATP + H2O = ADP + phosphate + H(+). Epithelial ion channel that plays an important role in the regulation of epithelial ion and water transport and fluid homeostasis. Mediates the transport of chloride ions across the cell membrane. Possesses an intrinsic ATPase activity and utilizes ATP to gate its channel; the passive flow of anions through the channel is gated by cycles of ATP binding and hydrolysis by the ATP-binding domains. The ion channel is also permeable to HCO(3)(-); selectivity depends on the extracellular chloride concentration. Exerts its function also by modulating the activity of other ion channels and transporters. Contributes to the regulation of the pH and the ion content of the epithelial fluid layer. Modulates the activity of the epithelial sodium channel (ENaC) complex, in part by regulating the cell surface expression of the ENaC complex. May regulate bicarbonate secretion and salvage in epithelial cells by regulating the transporter SLC4A7. Can inhibit the chloride channel activity of ANO1. Plays a role in the chloride and bicarbonate homeostasis during sperm epididymal maturation and capacitation. The chain is Cystic fibrosis transmembrane conductance regulator from Muntiacus reevesi (Reeves' muntjac).